Consider the following 197-residue polypeptide: Beta-crystallin A2 (197 aa).

The interval 1–11 (MSSASAPGPAP) is N-terminal arm. Beta/gamma crystallin 'Greek key' domains are found at residues 12-52 (ACLT…KVEN) and 53-99 (GAWV…RPVL). Positions 100–105 (CANHSD) are connecting peptide. Beta/gamma crystallin 'Greek key' domains lie at 106–147 (SRVT…KVSS) and 148–196 (GAWV…RRVQ).

The protein belongs to the beta/gamma-crystallin family. Homo/heterodimer, or complexes of higher-order. The structure of beta-crystallin oligomers seems to be stabilized through interactions between the N-terminal arms.

In terms of biological role, crystallins are the dominant structural components of the vertebrate eye lens. The polypeptide is Beta-crystallin A2 (CRYBA2) (Oryctolagus cuniculus (Rabbit)).